The following is a 414-amino-acid chain: ORC1-type DNA replication protein 11 (414 aa).

Residues 60–64 (VGKTA), Tyr-207, and Arg-219 contribute to the ATP site.

This sequence belongs to the CDC6/cdc18 family.

Its function is as follows. Involved in regulation of DNA replication. This Haloarcula marismortui (strain ATCC 43049 / DSM 3752 / JCM 8966 / VKM B-1809) (Halobacterium marismortui) protein is ORC1-type DNA replication protein 11 (cdc6k).